A 749-amino-acid chain; its full sequence is Signal transducer and activator of transcription 4 (749 aa).

The SH2 domain maps to 570–665 (WIDGYIMGFV…ENPLKYLYPD (96 aa)). Lys668 bears the N6-acetyllysine mark. Tyr694 bears the Phosphotyrosine; by JAK mark. The residue at position 722 (Ser722) is a Phosphoserine.

This sequence belongs to the transcription factor STAT family. In terms of assembly, forms a homodimer or a heterodimer with a related family member. Interacts with ARL2BP. Interacts with STAT1. Interacts with JUN; this complex efficiently interacts with the AP-1-related sequence of the IFN-gamma promoter. Acetylation at Lys-668 is required for JAK2-mediated phosphorylation and activation of STAT4. Post-translationally, tyrosine phosphorylated upon IL12 and IFN-alpha activation, but not by IFN-gamma in T-lymphocytes and NK cells. Serine phosphorylation is required for maximal transcriptional activity but not for DNA binding. Phosphorylation by MAP2K6 at Ser-722 is required for full transcriptional activity induced by IL12. However this serine phosphorylation is not required for cell proliferation although critical for IFN-gamma production. In terms of tissue distribution, expression is restricted to testis, thymus, and spleen.

It localises to the cytoplasm. It is found in the nucleus. In terms of biological role, transcriptional regulator mainly expressed in hematopoietic cells that plays a critical role in cellular growth, differentiation and immune response. Plays a key role in the differentiation of T-helper 1 cells and the production of interferon-gamma. Also participates in multiple neutrophil functions including chemotaxis and production of the neutrophil extracellular traps. After IL12 binding to its receptor IL12RB2, STAT4 interacts with the intracellular domain of IL12RB2 and becomes tyrosine phosphorylated. Phosphorylated STAT4 then homodimerizes and migrates to the nucleus where it can recognize STAT target sequences present in IL12 responsive genes. Although IL12 appears to be the predominant activating signal, STAT4 can also be phosphorylated and activated in response to IFN-gamma stimulation via JAK1 and TYK2 and in response to different interleukins including IL23, IL2 and IL35. Transcription activation of IFN-gamma gene is mediated by interaction with JUN that forms a complex that efficiently interacts with the AP-1-related sequence of the IFN-gamma promoter. In response to IFN-alpha/beta signaling, acts as a transcriptional repressor and suppresses IL5 and IL13 mRNA expression during response to T-cell receptor (TCR) activation. This chain is Signal transducer and activator of transcription 4 (Stat4), found in Mus musculus (Mouse).